Reading from the N-terminus, the 168-residue chain is MPTLLLGAAIPFGTIAYTLVVFLILLVMLRKFAWGPLMGIMKEREEHVASEIDAAEKNHAEAKKLVEEQREMLKQSRVEAQELIERAKKQAEEQKDGIIAAAKEEAESIKTSAVQEIQREKEQAIATLQEQVASLSVQIASKVIEKELKEEDQVKLIRDYIKEVGEAR.

A helical membrane pass occupies residues 9-29; sequence AIPFGTIAYTLVVFLILLVML.

Belongs to the ATPase B chain family. As to quaternary structure, F-type ATPases have 2 components, F(1) - the catalytic core - and F(0) - the membrane proton channel. F(1) has five subunits: alpha(3), beta(3), gamma(1), delta(1), epsilon(1). F(0) has three main subunits: a(1), b(2) and c(10-14). The alpha and beta chains form an alternating ring which encloses part of the gamma chain. F(1) is attached to F(0) by a central stalk formed by the gamma and epsilon chains, while a peripheral stalk is formed by the delta and b chains.

The protein localises to the cell membrane. F(1)F(0) ATP synthase produces ATP from ADP in the presence of a proton or sodium gradient. F-type ATPases consist of two structural domains, F(1) containing the extramembraneous catalytic core and F(0) containing the membrane proton channel, linked together by a central stalk and a peripheral stalk. During catalysis, ATP synthesis in the catalytic domain of F(1) is coupled via a rotary mechanism of the central stalk subunits to proton translocation. In terms of biological role, component of the F(0) channel, it forms part of the peripheral stalk, linking F(1) to F(0). The protein is ATP synthase subunit b of Bacillus cytotoxicus (strain DSM 22905 / CIP 110041 / 391-98 / NVH 391-98).